A 967-amino-acid polypeptide reads, in one-letter code: E3 ubiquitin-protein ligase arkadia-C (967 aa).

Disordered stretches follow at residues 57–175 (QQID…VSSL) and 193–276 (RKRF…SGGM). Low complexity predominate over residues 112-131 (SSFSDCISSPSSSSHFGDSD). Over residues 149-160 (GINSTPRTQSAR) the composition is skewed to polar residues. Over residues 232 to 251 (SSSSSSENDLSSESSSSSST) the composition is skewed to low complexity. Positions 280-284 (VVVIE) match the SUMO interaction motif 1 (SIM) motif. The SUMO interaction motif 2 (SIM) signature appears at 305–311 (EVEIVTV). The disordered stretch occupies residues 321 to 343 (LGHPRSHWGQNSQSGRTQEHRTR). The short motif at 360-364 (VVDLT) is the SUMO interaction motif 3 (SIM) element. 4 disordered regions span residues 368 to 452 (DDPT…MPRL), 482 to 548 (HSHH…LSNN), 629 to 657 (LHHQTSACPHSNPASQPPPPPPPPPMDYV), and 669 to 689 (PSLTSTHAVPPPPPSHHLSTA). A compositionally biased stretch (low complexity) spans 385-395 (VSTVSSNTSTS). Basic residues predominate over residues 482-498 (HSHHFPHHHHHHHHHSS). The span at 629-642 (LHHQTSACPHSNPA) shows a compositional bias: polar residues. Positions 643 to 654 (SQPPPPPPPPPM) are enriched in pro residues. A ubiquitin binding region spans residues 880 to 882 (YPH). Cys915 and Cys918 together coordinate Zn(2+). The RING-type; atypical zinc finger occupies 915-956 (CTICLSILEEGEDVRRLPCMHLFHQVCVDQWLITNKKCPICR). A ubiquitin binding region spans residues 930–934 (RLPCM). Residues His938 and Cys941 each coordinate Zn(2+).

Belongs to the Arkadia family. Monomer.

The protein resides in the nucleus. The protein localises to the cytoplasm. It is found in the PML body. It carries out the reaction S-ubiquitinyl-[E2 ubiquitin-conjugating enzyme]-L-cysteine + [acceptor protein]-L-lysine = [E2 ubiquitin-conjugating enzyme]-L-cysteine + N(6)-ubiquitinyl-[acceptor protein]-L-lysine.. It participates in protein modification; protein ubiquitination. Its activity is regulated as follows. Binds free ubiquitin non-covalently via its RING-type zinc finger. Ubiquitin-binding leads to enhance the E3 ubiquitin-protein ligase activity by stabilizing the ubiquitin-conjugating enzyme E2 (donor ubiquitin) in the 'closed' conformation and activating ubiquitin transfer. Its function is as follows. E3 ubiquitin-protein ligase required for mesoderm patterning during embryonic development. Acts as an enhancer of the transcriptional responses of the smad2/smad3 effectors, which are activated downstream of BMP. Acts by mediating ubiquitination and degradation of SMAD inhibitors such as smad7, inducing their proteasomal degradation and thereby enhancing the transcriptional activity of TGF-beta and BMP. Specifically binds polysumoylated chains via SUMO interaction motifs (SIMs) and mediates ubiquitination of sumoylated substrates. The regulation of the BMP-SMAD signaling is however independent of sumoylation and is not dependent of SUMO interaction motifs (SIMs). In Xenopus laevis (African clawed frog), this protein is E3 ubiquitin-protein ligase arkadia-C (rnf111-c).